A 124-amino-acid polypeptide reads, in one-letter code: ATP synthase epsilon chain (124 aa).

The protein belongs to the ATPase epsilon chain family. As to quaternary structure, F-type ATPases have 2 components, CF(1) - the catalytic core - and CF(0) - the membrane proton channel. CF(1) has five subunits: alpha(3), beta(3), gamma(1), delta(1), epsilon(1). CF(0) has three main subunits: a, b and c.

It localises to the cell membrane. Produces ATP from ADP in the presence of a proton gradient across the membrane. The chain is ATP synthase epsilon chain from Corynebacterium glutamicum (strain ATCC 13032 / DSM 20300 / JCM 1318 / BCRC 11384 / CCUG 27702 / LMG 3730 / NBRC 12168 / NCIMB 10025 / NRRL B-2784 / 534).